A 190-amino-acid chain; its full sequence is Xanthine phosphoribosyltransferase 1 (190 aa).

Positions 20 and 27 each coordinate xanthine. Position 128 to 132 (128 to 132 (ANGEA)) interacts with 5-phospho-alpha-D-ribose 1-diphosphate. Residue lysine 156 participates in xanthine binding.

It belongs to the purine/pyrimidine phosphoribosyltransferase family. Xpt subfamily. Homodimer.

It localises to the cytoplasm. It carries out the reaction XMP + diphosphate = xanthine + 5-phospho-alpha-D-ribose 1-diphosphate. Its pathway is purine metabolism; XMP biosynthesis via salvage pathway; XMP from xanthine: step 1/1. In terms of biological role, converts the preformed base xanthine, a product of nucleic acid breakdown, to xanthosine 5'-monophosphate (XMP), so it can be reused for RNA or DNA synthesis. This is Xanthine phosphoribosyltransferase 1 from Clostridium botulinum (strain ATCC 19397 / Type A).